The chain runs to 1653 residues: Protein TOPAZ1 (1653 aa).

Disordered regions lie at residues 1-88 (MPRA…PGID), 212-238 (GCMH…TDPS), 553-591 (KMKS…KKDR), 855-893 (PNVA…GSMK), and 919-942 (EVTH…SSDL). Composition is skewed to basic and acidic residues over residues 58–69 (SGREEVESDKSA) and 221–236 (SKSK…DKTD). Polar residues predominate over residues 561–585 (RSASEVVSNTTEDTSLTNMTHNLTG). 2 stretches are compositionally biased toward basic and acidic residues: residues 858–877 (AEEH…KKEP) and 920–942 (VTHE…SSDL).

The protein resides in the cytoplasm. The protein localises to the cytosol. In terms of biological role, important for normal spermatogenesis and male fertility. Specifically required for progression to the post-meiotic stages of spermatocyte development. Seems to be necessary for normal expression levels of a number of testis-expressed gene transcripts, although its role in this process is unclear. This is Protein TOPAZ1 (TOPAZ1) from Bos taurus (Bovine).